The following is a 413-amino-acid chain: Gamma-glutamyl phosphate reductase (413 aa).

The protein belongs to the gamma-glutamyl phosphate reductase family.

It localises to the cytoplasm. It catalyses the reaction L-glutamate 5-semialdehyde + phosphate + NADP(+) = L-glutamyl 5-phosphate + NADPH + H(+). It participates in amino-acid biosynthesis; L-proline biosynthesis; L-glutamate 5-semialdehyde from L-glutamate: step 2/2. Functionally, catalyzes the NADPH-dependent reduction of L-glutamate 5-phosphate into L-glutamate 5-semialdehyde and phosphate. The product spontaneously undergoes cyclization to form 1-pyrroline-5-carboxylate. In Lactococcus lactis subsp. lactis (strain IL1403) (Streptococcus lactis), this protein is Gamma-glutamyl phosphate reductase.